The sequence spans 28 residues: M-ectatotoxin-Eb2c (28 aa).

Expressed by the venom gland.

The protein resides in the secreted. Its function is as follows. Antimicrobial peptide active against Gram-negative bacterium E.coli MH1 (MIC=3.5 uM) and P.aeruginosa PAO1 (MIC=10 uM) and against Gram-positive bacterium A.globiformis VKM Ac-1112 (MIC=1.25 uM). In Ectatomma brunneum (Ant), this protein is M-ectatotoxin-Eb2c.